A 257-amino-acid chain; its full sequence is DNA repair protein RecO (257 aa).

The protein belongs to the RecO family.

Its function is as follows. Involved in DNA repair and RecF pathway recombination. This chain is DNA repair protein RecO, found in Clostridium kluyveri (strain ATCC 8527 / DSM 555 / NBRC 12016 / NCIMB 10680 / K1).